A 137-amino-acid polypeptide reads, in one-letter code: ATP synthase epsilon chain (137 aa).

It belongs to the ATPase epsilon chain family. In terms of assembly, F-type ATPases have 2 components, CF(1) - the catalytic core - and CF(0) - the membrane proton channel. CF(1) has five subunits: alpha(3), beta(3), gamma(1), delta(1), epsilon(1). CF(0) has three main subunits: a, b and c.

Its subcellular location is the cell inner membrane. In terms of biological role, produces ATP from ADP in the presence of a proton gradient across the membrane. The chain is ATP synthase epsilon chain from Yersinia pestis bv. Antiqua (strain Antiqua).